A 321-amino-acid chain; its full sequence is Lipoyl synthase (321 aa).

[4Fe-4S] cluster-binding residues include C68, C73, C79, C94, C98, C101, and S308. Positions 80–297 (FNHGTATFMI…KAEAMAMGFT (218 aa)) constitute a Radical SAM core domain.

Belongs to the radical SAM superfamily. Lipoyl synthase family. [4Fe-4S] cluster is required as a cofactor.

The protein resides in the cytoplasm. The catalysed reaction is [[Fe-S] cluster scaffold protein carrying a second [4Fe-4S](2+) cluster] + N(6)-octanoyl-L-lysyl-[protein] + 2 oxidized [2Fe-2S]-[ferredoxin] + 2 S-adenosyl-L-methionine + 4 H(+) = [[Fe-S] cluster scaffold protein] + N(6)-[(R)-dihydrolipoyl]-L-lysyl-[protein] + 4 Fe(3+) + 2 hydrogen sulfide + 2 5'-deoxyadenosine + 2 L-methionine + 2 reduced [2Fe-2S]-[ferredoxin]. Its pathway is protein modification; protein lipoylation via endogenous pathway; protein N(6)-(lipoyl)lysine from octanoyl-[acyl-carrier-protein]: step 2/2. Functionally, catalyzes the radical-mediated insertion of two sulfur atoms into the C-6 and C-8 positions of the octanoyl moiety bound to the lipoyl domains of lipoate-dependent enzymes, thereby converting the octanoylated domains into lipoylated derivatives. This Yersinia enterocolitica serotype O:8 / biotype 1B (strain NCTC 13174 / 8081) protein is Lipoyl synthase.